A 154-amino-acid polypeptide reads, in one-letter code: MKLLSKIMIIALAASTLQACNGPGGMNKQGTGTLLGGAGGALLGSQFGKGKGQLVGVGVGALLGAVLGGQVGAGMDEQDRRIAELTSQKALETAPNGSNVEWRNPDNGNYGYVTPNKTYRNSTGQYCREYTQTVVIGGKQQKAYGNACRQPDGQ.

Positions 1-19 (MKLLSKIMIIALAASTLQA) are cleaved as a signal peptide. Cys20 carries N-palmitoyl cysteine lipidation. Cys20 carries the S-diacylglycerol cysteine lipid modification.

Belongs to the rickettsiale 17 kDa surface antigen family.

Its subcellular location is the cell outer membrane. In Rickettsia amblyommatis (Rickettsia amblyommii), this protein is 17 kDa surface antigen (omp).